The sequence spans 514 residues: Putative transposase y4uI (514 aa).

The 83-residue stretch at valine 11 to leucine 93 folds into the HTH IS408-type domain. One can recognise an Integrase catalytic domain in the interval histidine 128–aspartate 317.

It belongs to the transposase IS21/IS408/IS1162 family.

The protein is Putative transposase y4uI of Sinorhizobium fredii (strain NBRC 101917 / NGR234).